A 957-amino-acid chain; its full sequence is Glycine dehydrogenase (decarboxylating) (957 aa).

Residue Lys708 is modified to N6-(pyridoxal phosphate)lysine.

The protein belongs to the GcvP family. In terms of assembly, the glycine cleavage system is composed of four proteins: P, T, L and H. It depends on pyridoxal 5'-phosphate as a cofactor.

The catalysed reaction is N(6)-[(R)-lipoyl]-L-lysyl-[glycine-cleavage complex H protein] + glycine + H(+) = N(6)-[(R)-S(8)-aminomethyldihydrolipoyl]-L-lysyl-[glycine-cleavage complex H protein] + CO2. Its function is as follows. The glycine cleavage system catalyzes the degradation of glycine. The P protein binds the alpha-amino group of glycine through its pyridoxal phosphate cofactor; CO(2) is released and the remaining methylamine moiety is then transferred to the lipoamide cofactor of the H protein. This Shigella dysenteriae serotype 1 (strain Sd197) protein is Glycine dehydrogenase (decarboxylating).